The primary structure comprises 615 residues: ABC transporter G family member 22 (615 aa).

Positions 31-279 constitute an ABC transporter domain; the sequence is ITFKDLAYSV…EIGFPFPDQT (249 aa). 67–74 contributes to the ATP binding site; sequence GPSGSGKT. The 247-residue stretch at 364-610 folds into the ABC transmembrane type-2 domain; sequence SNCLVRFAVA…TMVFLCLHYF (247 aa). A run of 6 helical transmembrane segments spans residues 370-390, 400-420, 442-462, 477-497, 508-528, and 587-607; these read FAVA…LGMD, VLFY…SLFI, LALM…LGTI, FFAM…MLII, FAVG…FVPI, and INLI…FLCL.

It belongs to the ABC transporter superfamily. ABCG family. Eye pigment precursor importer (TC 3.A.1.204) subfamily.

Its subcellular location is the membrane. Functionally, may be involved in cell migration. This chain is ABC transporter G family member 22 (abcG22), found in Dictyostelium discoideum (Social amoeba).